Reading from the N-terminus, the 116-residue chain is Non-specific lipid-transfer protein (116 aa).

The signal sequence occupies residues 1–23 (MASMKVVCVALIMCIVIAPMAES). 4 disulfide bridges follow: C27–C74, C37–C51, C52–C97, and C72–C111.

This sequence belongs to the plant LTP family.

Functionally, plant non-specific lipid-transfer proteins transfer phospholipids as well as galactolipids across membranes. May play a role in wax or cutin deposition in the cell walls of expanding epidermal cells and certain secretory tissues. This Cicer arietinum (Chickpea) protein is Non-specific lipid-transfer protein.